The chain runs to 491 residues: Aspartyl/glutamyl-tRNA(Asn/Gln) amidotransferase subunit B (491 aa).

It belongs to the GatB/GatE family. GatB subfamily. Heterotrimer of A, B and C subunits.

The enzyme catalyses L-glutamyl-tRNA(Gln) + L-glutamine + ATP + H2O = L-glutaminyl-tRNA(Gln) + L-glutamate + ADP + phosphate + H(+). It catalyses the reaction L-aspartyl-tRNA(Asn) + L-glutamine + ATP + H2O = L-asparaginyl-tRNA(Asn) + L-glutamate + ADP + phosphate + 2 H(+). Functionally, allows the formation of correctly charged Asn-tRNA(Asn) or Gln-tRNA(Gln) through the transamidation of misacylated Asp-tRNA(Asn) or Glu-tRNA(Gln) in organisms which lack either or both of asparaginyl-tRNA or glutaminyl-tRNA synthetases. The reaction takes place in the presence of glutamine and ATP through an activated phospho-Asp-tRNA(Asn) or phospho-Glu-tRNA(Gln). This is Aspartyl/glutamyl-tRNA(Asn/Gln) amidotransferase subunit B from Prochlorococcus marinus (strain NATL2A).